The following is a 548-amino-acid chain: Chaperonin GroEL (548 aa).

Residues 30 to 33 (TLGP), Lys-51, 87 to 91 (DGTTT), Gly-415, 479 to 481 (NAA), and Asp-495 contribute to the ATP site.

This sequence belongs to the chaperonin (HSP60) family. As to quaternary structure, forms a cylinder of 14 subunits composed of two heptameric rings stacked back-to-back. Interacts with the co-chaperonin GroES. Post-translationally, UMPylated on a tyrosine residue by YdiU under ATP-limited conditions.

It localises to the cytoplasm. It catalyses the reaction ATP + H2O + a folded polypeptide = ADP + phosphate + an unfolded polypeptide.. Its activity is regulated as follows. UMPylation of the chaperone by YdiU negatively regulates its activity, facilitating Salmonella survival under ATP-limited conditions. Functionally, together with its co-chaperonin GroES, plays an essential role in assisting protein folding. The GroEL-GroES system forms a nano-cage that allows encapsulation of the non-native substrate proteins and provides a physical environment optimized to promote and accelerate protein folding. The protein is Chaperonin GroEL of Salmonella typhimurium (strain LT2 / SGSC1412 / ATCC 700720).